The chain runs to 312 residues: 1-phosphofructokinase (312 aa).

Residues 223–228 (SLGAEG) and 254–255 (GD) each bind ATP. The active-site Proton acceptor is the Asp255.

Belongs to the carbohydrate kinase PfkB family.

The catalysed reaction is beta-D-fructose 1-phosphate + ATP = beta-D-fructose 1,6-bisphosphate + ADP + H(+). Its function is as follows. Catalyzes the ATP-dependent phosphorylation of fructose-l-phosphate to fructose-l,6-bisphosphate. The polypeptide is 1-phosphofructokinase (fruK) (Escherichia coli O157:H7).